The chain runs to 160 residues: NADH-quinone oxidoreductase subunit B (160 aa).

[4Fe-4S] cluster-binding residues include cysteine 37, cysteine 38, cysteine 102, and cysteine 132.

The protein belongs to the complex I 20 kDa subunit family. NDH-1 is composed of 14 different subunits. Subunits NuoB, C, D, E, F, and G constitute the peripheral sector of the complex. [4Fe-4S] cluster is required as a cofactor.

The protein resides in the cell inner membrane. The enzyme catalyses a quinone + NADH + 5 H(+)(in) = a quinol + NAD(+) + 4 H(+)(out). NDH-1 shuttles electrons from NADH, via FMN and iron-sulfur (Fe-S) centers, to quinones in the respiratory chain. Couples the redox reaction to proton translocation (for every two electrons transferred, four hydrogen ions are translocated across the cytoplasmic membrane), and thus conserves the redox energy in a proton gradient. This is NADH-quinone oxidoreductase subunit B from Cupriavidus metallidurans (strain ATCC 43123 / DSM 2839 / NBRC 102507 / CH34) (Ralstonia metallidurans).